The following is a 150-amino-acid chain: Transcription antitermination protein NusB (150 aa).

It belongs to the NusB family.

Functionally, involved in transcription antitermination. Required for transcription of ribosomal RNA (rRNA) genes. Binds specifically to the boxA antiterminator sequence of the ribosomal RNA (rrn) operons. This Streptococcus equi subsp. zooepidemicus (strain H70) protein is Transcription antitermination protein NusB.